Consider the following 160-residue polypeptide: Aspartate carbamoyltransferase regulatory chain (160 aa).

4 residues coordinate Zn(2+): cysteine 110, cysteine 115, cysteine 140, and cysteine 143.

Belongs to the PyrI family. Contains catalytic and regulatory chains. Zn(2+) serves as cofactor.

Functionally, involved in allosteric regulation of aspartate carbamoyltransferase. In Hyperthermus butylicus (strain DSM 5456 / JCM 9403 / PLM1-5), this protein is Aspartate carbamoyltransferase regulatory chain.